The sequence spans 605 residues: Probable serine/threonine-protein kinase DDB_G0286481 (605 aa).

Residues 5-25 (YQIFFLLYLLCILYVISCGYI) form a helical membrane-spanning segment. Asn-53 carries N-linked (GlcNAc...) asparagine glycosylation. Low complexity-rich tracts occupy residues 54-81 (SSNNNNNNNNNNNNNNNNNNNNNNNNNN) and 89-104 (NCNNNSSNNNSDNKSN). A disordered region spans residues 54–170 (SSNNNNNNNN…LGGSMGSGSQ (117 aa)). Residues Asn-92, Asn-93, Asn-97, and Asn-101 are each glycosylated (N-linked (GlcNAc...) asparagine). The span at 105–123 (IKNKQHHHHSNFRNRRGKS) shows a compositional bias: basic residues. Asn-127 carries an N-linked (GlcNAc...) asparagine glycan. Residues 144–155 (QSSSYDTSELHQ) show a composition bias toward polar residues. The N-linked (GlcNAc...) asparagine glycan is linked to Asn-280. The Protein kinase domain occupies 312–597 (YEVIQKIGRG…AKEAMKHPYF (286 aa)). Residues 318-326 (IGRGKYSEV) and Lys-341 contribute to the ATP site. N-linked (GlcNAc...) asparagine glycosylation is present at Asn-390. Asp-429 functions as the Proton acceptor in the catalytic mechanism. An N-linked (GlcNAc...) asparagine glycan is attached at Asn-601.

Belongs to the protein kinase superfamily. CMGC Ser/Thr protein kinase family.

The protein resides in the membrane. The enzyme catalyses L-seryl-[protein] + ATP = O-phospho-L-seryl-[protein] + ADP + H(+). The catalysed reaction is L-threonyl-[protein] + ATP = O-phospho-L-threonyl-[protein] + ADP + H(+). The chain is Probable serine/threonine-protein kinase DDB_G0286481 from Dictyostelium discoideum (Social amoeba).